A 249-amino-acid chain; its full sequence is Flagellar L-ring protein (249 aa).

The first 25 residues, 1 to 25, serve as a signal peptide directing secretion; sequence MSRLRTSHALRTAAALVAVGCLASG. A lipid anchor (N-palmitoyl cysteine) is attached at Cys26. The S-diacylglycerol cysteine moiety is linked to residue Cys26.

This sequence belongs to the FlgH family. The basal body constitutes a major portion of the flagellar organelle and consists of four rings (L,P,S, and M) mounted on a central rod.

It is found in the cell outer membrane. Its subcellular location is the bacterial flagellum basal body. Functionally, assembles around the rod to form the L-ring and probably protects the motor/basal body from shearing forces during rotation. The protein is Flagellar L-ring protein of Afipia carboxidovorans (strain ATCC 49405 / DSM 1227 / KCTC 32145 / OM5) (Oligotropha carboxidovorans).